The following is a 547-amino-acid chain: Inositol 1,4,5-trisphosphate receptor-interacting protein-like 1 (547 aa).

The signal sequence occupies residues 1 to 22 (MAVISLMFLAVMYVVHHPLMVS). The Extracellular portion of the chain corresponds to 23–96 (DRMDLDTLAR…PFQAGGQDGG (74 aa)). Residues 28–66 (DTLARSRQLEKRMSEEMRQLEMEFEERSRAAEQKQKVEN) are a coiled coil. A helical membrane pass occupies residues 97 to 117 (PLGWILGNLWNAGLFCLFLIF). At 118–547 (ELLRQSMQHE…LPCSPVAGGL (430 aa)) the chain is on the cytoplasmic side.

This sequence belongs to the ITPRIP family.

It is found in the cell membrane. Functionally, functions as a ligand of CD3E, inhibiting TCR-CD3 complex signaling to regulate T cell activation. Induces stable CD3E-NCK1 binding, thereby preventing the CD3E-ZAP70 interaction and subsequently inhibiting the activation of the downstream ERK-NFkB signaling cascade and calcium influx. The polypeptide is Inositol 1,4,5-trisphosphate receptor-interacting protein-like 1 (Itpripl1) (Mus musculus (Mouse)).